The sequence spans 361 residues: Chorismate synthase (361 aa).

Residues arginine 48 and arginine 54 each coordinate NADP(+). FMN contacts are provided by residues 125–127 (RSS), 238–239 (NA), glycine 278, 293–297 (KPTSS), and arginine 319.

This sequence belongs to the chorismate synthase family. As to quaternary structure, homotetramer. It depends on FMNH2 as a cofactor.

It carries out the reaction 5-O-(1-carboxyvinyl)-3-phosphoshikimate = chorismate + phosphate. The protein operates within metabolic intermediate biosynthesis; chorismate biosynthesis; chorismate from D-erythrose 4-phosphate and phosphoenolpyruvate: step 7/7. Catalyzes the anti-1,4-elimination of the C-3 phosphate and the C-6 proR hydrogen from 5-enolpyruvylshikimate-3-phosphate (EPSP) to yield chorismate, which is the branch point compound that serves as the starting substrate for the three terminal pathways of aromatic amino acid biosynthesis. This reaction introduces a second double bond into the aromatic ring system. This chain is Chorismate synthase, found in Vibrio vulnificus (strain CMCP6).